We begin with the raw amino-acid sequence, 224 residues long: UPF0758 protein mma_2551 (224 aa).

Positions 102–224 (SLNSPQAVKK…VYSFAEHGHL (123 aa)) constitute an MPN domain. Zn(2+) contacts are provided by His173, His175, and Asp186. A JAMM motif motif is present at residues 173–186 (HNHPSGSSEPSAAD).

The protein belongs to the UPF0758 family.

In Janthinobacterium sp. (strain Marseille) (Minibacterium massiliensis), this protein is UPF0758 protein mma_2551.